Here is a 224-residue protein sequence, read N- to C-terminus: Perchlorate reductase assembly chaperone protein (224 aa).

This sequence belongs to the type II DMSO reductase enzyme chaperone family.

The protein resides in the cytoplasm. In terms of biological role, may function as a system-specific molybdenum chaperone protein essential for the assembly of the perchlorate reductase PcrAB complex prior to its periplasmic translocation via the Tat pathway. The chain is Perchlorate reductase assembly chaperone protein (pcrD) from Dechloromonas aromatica (strain RCB).